Consider the following 591-residue polypeptide: V-type ATP synthase alpha chain (591 aa).

242–249 (GPFGAGKT) lines the ATP pocket.

This sequence belongs to the ATPase alpha/beta chains family.

It carries out the reaction ATP + H2O + 4 H(+)(in) = ADP + phosphate + 5 H(+)(out). Its function is as follows. Produces ATP from ADP in the presence of a proton gradient across the membrane. The V-type alpha chain is a catalytic subunit. This Chlamydia caviae (strain ATCC VR-813 / DSM 19441 / 03DC25 / GPIC) (Chlamydophila caviae) protein is V-type ATP synthase alpha chain.